A 168-amino-acid polypeptide reads, in one-letter code: Plastocyanin, chloroplastic (168 aa).

A chloroplast-targeting transit peptide spans 1 to 70 (MASVAAAAVS…SSLLLVASAN (70 aa)). A Plastocyanin-like domain is found at 71–168 (AATVKMGGDD…AGMKGVVTVS (98 aa)). The Cu cation site is built by His-108, Cys-153, His-156, and Met-161.

The protein belongs to the plastocyanin family. It depends on Cu(2+) as a cofactor.

It is found in the plastid. It localises to the chloroplast thylakoid membrane. Its function is as follows. Participates in electron transfer between P700 and the cytochrome b6-f complex in photosystem I. This Physcomitrium patens (Spreading-leaved earth moss) protein is Plastocyanin, chloroplastic (PETE).